Here is a 628-residue protein sequence, read N- to C-terminus: Glutamyl-tRNA(Gln) amidotransferase subunit E (628 aa).

The protein belongs to the GatB/GatE family. GatE subfamily. As to quaternary structure, heterodimer of GatD and GatE.

The enzyme catalyses L-glutamyl-tRNA(Gln) + L-glutamine + ATP + H2O = L-glutaminyl-tRNA(Gln) + L-glutamate + ADP + phosphate + H(+). Its function is as follows. Allows the formation of correctly charged Gln-tRNA(Gln) through the transamidation of misacylated Glu-tRNA(Gln) in organisms which lack glutaminyl-tRNA synthetase. The reaction takes place in the presence of glutamine and ATP through an activated gamma-phospho-Glu-tRNA(Gln). The GatDE system is specific for glutamate and does not act on aspartate. The sequence is that of Glutamyl-tRNA(Gln) amidotransferase subunit E from Pyrococcus furiosus (strain ATCC 43587 / DSM 3638 / JCM 8422 / Vc1).